The sequence spans 90 residues: Small ribosomal subunit protein bS16 (90 aa).

This sequence belongs to the bacterial ribosomal protein bS16 family.

The polypeptide is Small ribosomal subunit protein bS16 (Streptococcus gordonii (strain Challis / ATCC 35105 / BCRC 15272 / CH1 / DL1 / V288)).